A 523-amino-acid chain; its full sequence is REST corepressor 2 (523 aa).

The disordered stretch occupies residues 1–43 (MPSVMEKPSAGSGILSRSRAKTAPNGGQPHSEDDSSEEEHSHD). Over residues 30 to 43 (HSEDDSSEEEHSHD) the composition is skewed to basic and acidic residues. Phosphoserine is present on residues serine 31, serine 35, serine 36, and serine 63. The 86-residue stretch at 44–129 (SMIRVGTNYQ…KSLADLANFT (86 aa)) folds into the ELM2 domain. Lysine 88 participates in a covalent cross-link: Glycyl lysine isopeptide (Lys-Gly) (interchain with G-Cter in SUMO2). Positions 130–181 (PFPDEWTVEDKVLFEQAFGFHGKCFQRIQQMLPDKVIPSLVKYYYSWKKTRS) constitute an SANT 1 domain. The tract at residues 185-244 (VMDRQARRLGGRKDKEDSDELEEGRGAVSEGEPDTGDPKREPLPSRPLNARPGPGKKEVQ) is disordered. Serine 202 carries the phosphoserine modification. Residues 283-314 (TLRGLDSQLISLKRQVQSMKQTNSSLRQALEG) adopt a coiled-coil conformation. Residues 327–378 (KFNSRWTTDEQLLAVQAIRRYGKDFGAIAEVIGNKTLTQVKTFFVSYRRRFN) enclose the SANT 2 domain. The segment at 387-523 (EAEQDGAPAA…APLEPPAPSL (137 aa)) is disordered. A compositionally biased stretch (pro residues) spans 432 to 459 (SVPPAPPPPPPPTSLSQPPPLLRPPLPT). Over residues 460–482 (APTLLRQPPPLQQGRFLQPRLAP) the composition is skewed to low complexity. An Asymmetric dimethylarginine modification is found at arginine 479. Residues 504–523 (GPQPPPTLVGAPLEPPAPSL) are compositionally biased toward pro residues.

The protein belongs to the CoREST family. In terms of tissue distribution, predominantly, but not exclusively, expressed in neural tissue. Strongly expressed in neural domains of the developing brain of the developing mouse CNS.

It is found in the nucleus. Its function is as follows. May act as a component of a corepressor complex that represses transcription. In Mus musculus (Mouse), this protein is REST corepressor 2 (Rcor2).